Reading from the N-terminus, the 811-residue chain is Vacuolar protein sorting-associated protein 70 (811 aa).

Positions 1 to 21 (MRMIQRERKREKEEGQLKERT) are enriched in basic and acidic residues. Residues 1 to 63 (MRMIQRERKR…MNDSFTLTSR (63 aa)) are disordered. Asn55 is a glycosylation site (N-linked (GlcNAc...) asparagine). A helical membrane pass occupies residues 90–110 (FMYLILASLLLYMGFVAAFAP). Asn237 is a glycosylation site (N-linked (GlcNAc...) asparagine). Residues 334-367 (FSDTPGDPTTPGYPSKDSDTEHMSPVGRVPRIPS) form a disordered region. Residues 336–345 (DTPGDPTTPG) are compositionally biased toward low complexity. His445, Asp456, and Asp522 together coordinate Zn(2+). 2 N-linked (GlcNAc...) asparagine glycosylation sites follow: Asn568 and Asn599. Position 607 (His607) interacts with Zn(2+). Residue Asn670 is glycosylated (N-linked (GlcNAc...) asparagine).

This sequence belongs to the peptidase M28 family. M28B subfamily. Zn(2+) is required as a cofactor.

It localises to the membrane. Its function is as follows. Involved in vacuolar protein sorting. This is Vacuolar protein sorting-associated protein 70 (VPS70) from Saccharomyces cerevisiae (strain ATCC 204508 / S288c) (Baker's yeast).